Consider the following 3172-residue polypeptide: Erythronolide synthase EryA3 (3172 aa).

Positions 38–452 constitute a Ketosynthase family 3 (KS3) 1 domain; it reads GEPIAIVGMA…GTNAHVIVEE (415 aa). Module stretches follow at residues 41–1464 and 1492–2891; these read IAIV…DHYL and IAIV…DHIG. Cys199 serves as the catalytic Acyl-thioester intermediate; for beta-ketoacyl synthase 1 activity. Catalysis depends on for beta-ketoacyl synthase 1 activity residues His334 and His374. Positions 557–874 are acyltransferase 1; that stretch reads VFPGQGAQWQ…LGEAYAQGVE (318 aa). Ser643 functions as the Acyl-ester intermediate; for acyltransferase 1 activity in the catalytic mechanism. The tract at residues 1117-1294 is beta-ketoacyl reductase 1; sequence GTVLVTGGTG…VTSIAWGLWA (178 aa). Residues 1125-1128, 1148-1151, 1177-1178, Lys1229, and 1249-1250 contribute to the NADP(+) site; these read TGGI, GRRG, DV, and FS. Tyr1264 functions as the Acyl-ester intermediate; for beta-ketoacyl reductase 1 activity in the catalytic mechanism. The region spanning 1392 to 1467 is the Carrier 1 domain; that stretch reads EHLAHLIRAE…RLADHYLERL (76 aa). Ser1427 carries the O-(pantetheine 4'-phosphoryl)serine modification. The Ketosynthase family 3 (KS3) 2 domain occupies 1489-1916; that stretch reads DDPIAIVGMA…GTNAHVIIAE (428 aa). Cys1661 acts as the Acyl-thioester intermediate; for beta-ketoacyl synthase 2 activity in catalysis. Active-site for beta-ketoacyl synthase 2 activity residues include His1797 and His1837. An acyltransferase 2 region spans residues 2022–2331; it reads VFVFPGQGAQ…LARAHVHGVA (310 aa). The active-site Acyl-ester intermediate; for acyltransferase 2 activity is the Ser2112. Residues 2557 to 2731 are beta-ketoacyl reductase 2; the sequence is GTALVTGGTG…ATSVAWGAWA (175 aa). NADP(+) is bound by residues 2565 to 2568, 2588 to 2591, 2617 to 2618, Lys2666, and 2686 to 2687; these read TGAL, SRRG, DV, and FS. The active-site Acyl-ester intermediate; for beta-ketoacyl reductase 2 activity is Tyr2701. Residues 2819 to 2894 enclose the Carrier 2 domain; that stretch reads QELLEFTHSH…RLADHIGQQL (76 aa). Ser2854 bears the O-(pantetheine 4'-phosphoryl)serine mark. The thioesterase stretch occupies residues 2960–3166; the sequence is ICCAGTAAIS…DAIARHIDAW (207 aa). A substrate-binding site is contributed by Thr2965. Catalysis depends on Ser3031, which acts as the Nucleophile; for thioesterase activity. Substrate contacts are provided by Ala3032 and Asp3058. His3148 acts as the Proton acceptor; for thioesterase activity in catalysis.

Homodimer. Erythronolide synthase is composed of EryAI, EryAII and EryAIII multimodular (2 modules) polypeptides each coding for a functional synthase subunit which participates in 2 of the six FAS-like elongation steps required for formation of the polyketide. Module 1, 2, 3, 4, 5, and 6 participating in biosynthesis steps 1, 2, 3, 4, 5, and 6, respectively. The cofactor is pantetheine 4'-phosphate.

The enzyme catalyses 6 (S)-methylmalonyl-CoA + propanoyl-CoA + 6 NADPH + 12 H(+) = 6-deoxyerythronolide B + 6 CO2 + 6 NADP(+) + 7 CoA + H2O. It functions in the pathway antibiotic biosynthesis; erythromycin biosynthesis. With respect to regulation, inhibited by diphenyl phosphonates derivatives such as diphenyl allylphosphonate. In terms of biological role, involved in the biosynthesis of antibiotic erythromycin via the biosynthesis of its aglycone precursor, 6-deoxyerythronolide B (6-dEB). The chain is Erythronolide synthase EryA3 from Saccharopolyspora erythraea (Streptomyces erythraeus).